We begin with the raw amino-acid sequence, 338 residues long: Lipoate-protein ligase A (338 aa).

One can recognise a BPL/LPL catalytic domain in the interval 29–216; it reads PATQRVLFLW…AFFAHYGERV (188 aa). Residues Arg71, 76–79, and Lys134 contribute to the ATP site; that span reads GAVF. Lys134 provides a ligand contact to (R)-lipoate.

Belongs to the LplA family. As to quaternary structure, monomer.

It localises to the cytoplasm. The enzyme catalyses L-lysyl-[lipoyl-carrier protein] + (R)-lipoate + ATP = N(6)-[(R)-lipoyl]-L-lysyl-[lipoyl-carrier protein] + AMP + diphosphate + H(+). The protein operates within protein modification; protein lipoylation via exogenous pathway; protein N(6)-(lipoyl)lysine from lipoate: step 1/2. It functions in the pathway protein modification; protein lipoylation via exogenous pathway; protein N(6)-(lipoyl)lysine from lipoate: step 2/2. Catalyzes both the ATP-dependent activation of exogenously supplied lipoate to lipoyl-AMP and the transfer of the activated lipoyl onto the lipoyl domains of lipoate-dependent enzymes. In Salmonella agona (strain SL483), this protein is Lipoate-protein ligase A.